A 309-amino-acid polypeptide reads, in one-letter code: Probable lipid kinase YegS-like (309 aa).

A DAGKc domain is found at 1–134 (MAPSHWRLIL…IDLLRIDADH (134 aa)). ATP-binding positions include Thr39, 65-71 (GDGTLSE), and Thr96. Mg(2+) contacts are provided by Leu219, Asp222, and Leu224. The active-site Proton acceptor is the Glu280.

Belongs to the diacylglycerol/lipid kinase family. YegS lipid kinase subfamily. The cofactor is Mg(2+). Ca(2+) is required as a cofactor.

It localises to the cytoplasm. Probably phosphorylates lipids; the in vivo substrate is unknown. This is Probable lipid kinase YegS-like from Xanthomonas campestris pv. campestris (strain 8004).